The sequence spans 129 residues: Small ribosomal subunit protein uS8 (129 aa).

The protein belongs to the universal ribosomal protein uS8 family. In terms of assembly, part of the 30S ribosomal subunit.

One of the primary rRNA binding proteins, it binds directly to 16S rRNA central domain where it helps coordinate assembly of the platform of the 30S subunit. The chain is Small ribosomal subunit protein uS8 from Archaeoglobus fulgidus (strain ATCC 49558 / DSM 4304 / JCM 9628 / NBRC 100126 / VC-16).